Here is a 423-residue protein sequence, read N- to C-terminus: Adenylosuccinate synthetase (423 aa).

GTP-binding positions include 12–18 (GDEGKGK) and 40–42 (GHT). Asp13 (proton acceptor) is an active-site residue. Mg(2+) contacts are provided by Asp13 and Gly40. IMP is bound by residues 13–16 (DEGK), 38–41 (NAGH), Thr129, Arg143, Gln224, Thr239, and Arg303. The active-site Proton donor is His41. 299 to 305 (ATTGRKR) contacts substrate. Residues Arg305, 331–333 (KGD), and 412–414 (SVG) contribute to the GTP site.

It belongs to the adenylosuccinate synthetase family. As to quaternary structure, homodimer. Mg(2+) is required as a cofactor.

It localises to the cytoplasm. It carries out the reaction IMP + L-aspartate + GTP = N(6)-(1,2-dicarboxyethyl)-AMP + GDP + phosphate + 2 H(+). Its pathway is purine metabolism; AMP biosynthesis via de novo pathway; AMP from IMP: step 1/2. Plays an important role in the de novo pathway of purine nucleotide biosynthesis. Catalyzes the first committed step in the biosynthesis of AMP from IMP. The polypeptide is Adenylosuccinate synthetase (Christiangramia forsetii (strain DSM 17595 / CGMCC 1.15422 / KT0803) (Gramella forsetii)).